A 173-amino-acid chain; its full sequence is Crossover junction endodeoxyribonuclease RuvC (173 aa).

Active-site residues include D8, E67, and D139. Residues D8, E67, and D139 each contribute to the Mg(2+) site.

Belongs to the RuvC family. As to quaternary structure, homodimer which binds Holliday junction (HJ) DNA. The HJ becomes 2-fold symmetrical on binding to RuvC with unstacked arms; it has a different conformation from HJ DNA in complex with RuvA. In the full resolvosome a probable DNA-RuvA(4)-RuvB(12)-RuvC(2) complex forms which resolves the HJ. Mg(2+) serves as cofactor.

The protein resides in the cytoplasm. It carries out the reaction Endonucleolytic cleavage at a junction such as a reciprocal single-stranded crossover between two homologous DNA duplexes (Holliday junction).. The RuvA-RuvB-RuvC complex processes Holliday junction (HJ) DNA during genetic recombination and DNA repair. Endonuclease that resolves HJ intermediates. Cleaves cruciform DNA by making single-stranded nicks across the HJ at symmetrical positions within the homologous arms, yielding a 5'-phosphate and a 3'-hydroxyl group; requires a central core of homology in the junction. The consensus cleavage sequence is 5'-(A/T)TT(C/G)-3'. Cleavage occurs on the 3'-side of the TT dinucleotide at the point of strand exchange. HJ branch migration catalyzed by RuvA-RuvB allows RuvC to scan DNA until it finds its consensus sequence, where it cleaves and resolves the cruciform DNA. The polypeptide is Crossover junction endodeoxyribonuclease RuvC (Shewanella baltica (strain OS223)).